Reading from the N-terminus, the 151-residue chain is MRCPKCQHNGTRVLDSRPSDESRSIKRRRECEKCLQRFTTYETVEERPLLIIKKDGMREEFSSDKMLRGLVRACEKRPVPLETLEKMVLDVERTLRNEGKQEVRSQDVGELVMERLAKIDDVAYVRFASVYRQFKDINVFIKELTELMNKN.

Residues 1–24 are disordered; that stretch reads MRCPKCQHNGTRVLDSRPSDESRS. A zinc finger lies at 3-34; the sequence is CPKCQHNGTRVLDSRPSDESRSIKRRRECEKC. Residues 14-24 show a composition bias toward basic and acidic residues; the sequence is LDSRPSDESRS. The 91-residue stretch at 49–139 folds into the ATP-cone domain; it reads LLIIKKDGMR…VYRQFKDINV (91 aa).

This sequence belongs to the NrdR family. Requires Zn(2+) as cofactor.

In terms of biological role, negatively regulates transcription of bacterial ribonucleotide reductase nrd genes and operons by binding to NrdR-boxes. This is Transcriptional repressor NrdR from Shouchella clausii (strain KSM-K16) (Alkalihalobacillus clausii).